The primary structure comprises 453 residues: UDP-N-acetylmuramoylalanine--D-glutamate ligase (453 aa).

120–126 (GSNGKST) serves as a coordination point for ATP.

It belongs to the MurCDEF family.

It is found in the cytoplasm. The catalysed reaction is UDP-N-acetyl-alpha-D-muramoyl-L-alanine + D-glutamate + ATP = UDP-N-acetyl-alpha-D-muramoyl-L-alanyl-D-glutamate + ADP + phosphate + H(+). The protein operates within cell wall biogenesis; peptidoglycan biosynthesis. In terms of biological role, cell wall formation. Catalyzes the addition of glutamate to the nucleotide precursor UDP-N-acetylmuramoyl-L-alanine (UMA). This Nitrosococcus oceani (strain ATCC 19707 / BCRC 17464 / JCM 30415 / NCIMB 11848 / C-107) protein is UDP-N-acetylmuramoylalanine--D-glutamate ligase.